The following is a 358-amino-acid chain: uncharacterized protein (358 aa).

7 residues coordinate Zn(2+): Cys-39, His-61, Cys-92, Cys-95, Cys-98, Cys-106, and Asp-157.

It belongs to the zinc-containing alcohol dehydrogenase family. It depends on Zn(2+) as a cofactor.

This is an uncharacterized protein from Escherichia coli (strain K12).